The chain runs to 381 residues: UDP-4-amino-4-deoxy-L-arabinose--oxoglutarate aminotransferase (381 aa).

N6-(pyridoxal phosphate)lysine is present on Lys-182.

The protein belongs to the DegT/DnrJ/EryC1 family. ArnB subfamily. In terms of assembly, homodimer. Requires pyridoxal 5'-phosphate as cofactor.

It catalyses the reaction UDP-4-amino-4-deoxy-beta-L-arabinose + 2-oxoglutarate = UDP-beta-L-threo-pentopyranos-4-ulose + L-glutamate. The protein operates within nucleotide-sugar biosynthesis; UDP-4-deoxy-4-formamido-beta-L-arabinose biosynthesis; UDP-4-deoxy-4-formamido-beta-L-arabinose from UDP-alpha-D-glucuronate: step 2/3. It functions in the pathway bacterial outer membrane biogenesis; lipopolysaccharide biosynthesis. In terms of biological role, catalyzes the conversion of UDP-4-keto-arabinose (UDP-Ara4O) to UDP-4-amino-4-deoxy-L-arabinose (UDP-L-Ara4N). The modified arabinose is attached to lipid A and is required for resistance to polymyxin and cationic antimicrobial peptides. In Photorhabdus laumondii subsp. laumondii (strain DSM 15139 / CIP 105565 / TT01) (Photorhabdus luminescens subsp. laumondii), this protein is UDP-4-amino-4-deoxy-L-arabinose--oxoglutarate aminotransferase.